Consider the following 382-residue polypeptide: Anhydro-N-acetylmuramic acid kinase (382 aa).

Position 9 to 16 (9 to 16) interacts with ATP; it reads GTSLDGID.

Belongs to the anhydro-N-acetylmuramic acid kinase family.

It catalyses the reaction 1,6-anhydro-N-acetyl-beta-muramate + ATP + H2O = N-acetyl-D-muramate 6-phosphate + ADP + H(+). Its pathway is amino-sugar metabolism; 1,6-anhydro-N-acetylmuramate degradation. It functions in the pathway cell wall biogenesis; peptidoglycan recycling. Catalyzes the specific phosphorylation of 1,6-anhydro-N-acetylmuramic acid (anhMurNAc) with the simultaneous cleavage of the 1,6-anhydro ring, generating MurNAc-6-P. Is required for the utilization of anhMurNAc either imported from the medium or derived from its own cell wall murein, and thus plays a role in cell wall recycling. In Bacillus cereus (strain AH187), this protein is Anhydro-N-acetylmuramic acid kinase.